A 172-amino-acid chain; its full sequence is Adenine phosphoribosyltransferase (172 aa).

Belongs to the purine/pyrimidine phosphoribosyltransferase family. In terms of assembly, homodimer.

It is found in the cytoplasm. It catalyses the reaction AMP + diphosphate = 5-phospho-alpha-D-ribose 1-diphosphate + adenine. It participates in purine metabolism; AMP biosynthesis via salvage pathway; AMP from adenine: step 1/1. In terms of biological role, catalyzes a salvage reaction resulting in the formation of AMP, that is energically less costly than de novo synthesis. This Staphylococcus aureus (strain Mu3 / ATCC 700698) protein is Adenine phosphoribosyltransferase.